The chain runs to 526 residues: Alpha-ketoglutaric semialdehyde dehydrogenase (526 aa).

NADP(+) is bound by residues 159-160, 185-188, and 240-241; these read SN, KAHS, and GS. Catalysis depends on Glu-264, which acts as the Proton acceptor. The active-site Nucleophile is Cys-301. Glu-393 contributes to the NADP(+) binding site.

Belongs to the aldehyde dehydrogenase family.

The enzyme catalyses 2,5-dioxopentanoate + NADP(+) + H2O = 2-oxoglutarate + NADPH + 2 H(+). The protein operates within carbohydrate acid metabolism; D-glucarate degradation. Catalyzes the NAD(P)(+)-dependent oxidation of alpha-ketoglutaric semialdehyde (alphaKGSA) to alpha-ketoglutarate in the D-glutarate degradation pathway. This chain is Alpha-ketoglutaric semialdehyde dehydrogenase, found in Acinetobacter baylyi (strain ATCC 33305 / BD413 / ADP1).